The sequence spans 156 residues: Small ribosomal subunit protein uS7 (156 aa).

The protein belongs to the universal ribosomal protein uS7 family. In terms of assembly, part of the 30S ribosomal subunit. Contacts proteins S9 and S11.

Functionally, one of the primary rRNA binding proteins, it binds directly to 16S rRNA where it nucleates assembly of the head domain of the 30S subunit. Is located at the subunit interface close to the decoding center, probably blocks exit of the E-site tRNA. The chain is Small ribosomal subunit protein uS7 from Baumannia cicadellinicola subsp. Homalodisca coagulata.